The chain runs to 376 residues: Polygalacturonase (376 aa).

A signal peptide spans 1–20 (MASSLKLGLIALLGATAVNA). A disulfide bridge links Cys39 with Cys57. The PbH1 1 repeat unit spans residues 170–208 (AKELTLSGITVDTADGDSNGGHNTDAFDVGSSNGVYITS). Residue Asp215 is the Proton donor of the active site. A disulfide bond links Cys217 and Cys233. PbH1 repeat units follow at residues 223–243 (GTNVHFTGAQCTGGHGISIGS), 252–273 (VDGVTVESCTIKDSDNGVRIKT), 281–303 (VQGVTYKDITLSGIAKYGIVIEQ), and 315–360 (TSGV…SITG). His237 is a catalytic residue. Disulfide bonds link Cys343/Cys348 and Cys367/Cys376.

The protein belongs to the glycosyl hydrolase 28 family.

Its subcellular location is the secreted. The catalysed reaction is (1,4-alpha-D-galacturonosyl)n+m + H2O = (1,4-alpha-D-galacturonosyl)n + (1,4-alpha-D-galacturonosyl)m.. The protein is Polygalacturonase (PGG1) of Penicillium griseoroseum.